The primary structure comprises 495 residues: 3-octaprenyl-4-hydroxybenzoate carboxy-lyase (495 aa).

N171 is a binding site for Mn(2+). Prenylated FMN is bound by residues 174–176 (IYR), 188–190 (RWL), and 193–194 (RG). E237 contacts Mn(2+). D286 functions as the Proton donor in the catalytic mechanism.

This sequence belongs to the UbiD family. In terms of assembly, homohexamer. Prenylated FMN is required as a cofactor. Mn(2+) serves as cofactor.

It is found in the cell membrane. It carries out the reaction a 4-hydroxy-3-(all-trans-polyprenyl)benzoate + H(+) = a 2-(all-trans-polyprenyl)phenol + CO2. It participates in cofactor biosynthesis; ubiquinone biosynthesis. Its function is as follows. Catalyzes the decarboxylation of 3-octaprenyl-4-hydroxy benzoate to 2-octaprenylphenol, an intermediate step in ubiquinone biosynthesis. This Hamiltonella defensa subsp. Acyrthosiphon pisum (strain 5AT) protein is 3-octaprenyl-4-hydroxybenzoate carboxy-lyase.